Reading from the N-terminus, the 253-residue chain is ATP synthase subunit a (253 aa).

Transmembrane regions (helical) follow at residues 34–54, 89–109, 118–138, 156–178, 203–223, and 226–246; these read SSLF…LSFY, YFPF…IGMI, HIVF…LIGI, LAIV…FTLS, LSAG…LLAL, and LELA…CIYL.

It belongs to the ATPase A chain family. In terms of assembly, F-type ATPases have 2 components, CF(1) - the catalytic core - and CF(0) - the membrane proton channel. CF(1) has five subunits: alpha(3), beta(3), gamma(1), delta(1), epsilon(1). CF(0) has three main subunits: a, b and c.

It localises to the mitochondrion inner membrane. Functionally, mitochondrial membrane ATP synthase (F(1)F(0) ATP synthase or Complex V) produces ATP from ADP in the presence of a proton gradient across the membrane which is generated by electron transport complexes of the respiratory chain. F-type ATPases consist of two structural domains, F(1) - containing the extramembraneous catalytic core and F(0) - containing the membrane proton channel, linked together by a central stalk and a peripheral stalk. During catalysis, ATP synthesis in the catalytic domain of F(1) is coupled via a rotary mechanism of the central stalk subunits to proton translocation. Key component of the proton channel; it may play a direct role in the translocation of protons across the membrane. This chain is ATP synthase subunit a (ATP6), found in Chondrus crispus (Carrageen Irish moss).